The sequence spans 466 residues: 3-isopropylmalate dehydratase large subunit (466 aa).

[4Fe-4S] cluster is bound by residues C347, C407, and C410.

The protein belongs to the aconitase/IPM isomerase family. LeuC type 1 subfamily. In terms of assembly, heterodimer of LeuC and LeuD. It depends on [4Fe-4S] cluster as a cofactor.

The enzyme catalyses (2R,3S)-3-isopropylmalate = (2S)-2-isopropylmalate. Its pathway is amino-acid biosynthesis; L-leucine biosynthesis; L-leucine from 3-methyl-2-oxobutanoate: step 2/4. In terms of biological role, catalyzes the isomerization between 2-isopropylmalate and 3-isopropylmalate, via the formation of 2-isopropylmaleate. This is 3-isopropylmalate dehydratase large subunit from Acidiphilium cryptum (strain JF-5).